The sequence spans 71 residues: uncharacterized protein (71 aa).

This is an uncharacterized protein from Cassava vein mosaic virus (CsVMV).